The sequence spans 411 residues: Probable 26S proteasome regulatory subunit rpn-6.2 (411 aa).

The 170-residue stretch at 212–381 (YKTSFSYFYE…DTVVIYPKAG (170 aa)) folds into the PCI domain.

The protein belongs to the proteasome subunit S9 family. In terms of assembly, component of the lid subcomplex of the 19S proteasome regulatory particle complex (also named PA700 complex). The 26S proteasome consists of a 20S proteasome core and two 19S regulatory subunits.

In terms of biological role, component of the lid subcomplex of the 26S proteasome, a multiprotein complex involved in the ATP-dependent degradation of ubiquitinated proteins. In the complex, rpn-6.2 is required for proteasome assembly. The polypeptide is Probable 26S proteasome regulatory subunit rpn-6.2 (Caenorhabditis briggsae).